The following is a 107-amino-acid chain: Integration host factor subunit beta (107 aa).

Basic and acidic residues predominate over residues 82–101; the sequence is PGKELRERVDRRAGEPLKAE. The disordered stretch occupies residues 82 to 107; it reads PGKELRERVDRRAGEPLKAEEPDDDL.

It belongs to the bacterial histone-like protein family. Heterodimer of an alpha and a beta chain.

In terms of biological role, this protein is one of the two subunits of integration host factor, a specific DNA-binding protein that functions in genetic recombination as well as in transcriptional and translational control. The polypeptide is Integration host factor subunit beta (Paraburkholderia phytofirmans (strain DSM 17436 / LMG 22146 / PsJN) (Burkholderia phytofirmans)).